A 505-amino-acid polypeptide reads, in one-letter code: ATP synthase subunit alpha (505 aa).

Gly170–Thr177 lines the ATP pocket.

This sequence belongs to the ATPase alpha/beta chains family. As to quaternary structure, F-type ATPases have 2 components, CF(1) - the catalytic core - and CF(0) - the membrane proton channel. CF(1) has five subunits: alpha(3), beta(3), gamma(1), delta(1), epsilon(1). CF(0) has four main subunits: a(1), b(1), b'(1) and c(9-12).

The protein resides in the cellular thylakoid membrane. It catalyses the reaction ATP + H2O + 4 H(+)(in) = ADP + phosphate + 5 H(+)(out). Functionally, produces ATP from ADP in the presence of a proton gradient across the membrane. The alpha chain is a regulatory subunit. The chain is ATP synthase subunit alpha from Synechococcus sp. (strain RCC307).